The chain runs to 133 residues: UPF0292 protein TK1411 (133 aa).

The 81-residue stretch at E20–L100 folds into the Toprim domain. 3 residues coordinate Mg(2+): E26, D69, and D71.

This sequence belongs to the UPF0292 family. Requires Mg(2+) as cofactor.

The polypeptide is UPF0292 protein TK1411 (Thermococcus kodakarensis (strain ATCC BAA-918 / JCM 12380 / KOD1) (Pyrococcus kodakaraensis (strain KOD1))).